A 209-amino-acid polypeptide reads, in one-letter code: Uracil phosphoribosyltransferase (209 aa).

Residues arginine 79, arginine 104, and 131 to 139 (TPVVATANT) contribute to the 5-phospho-alpha-D-ribose 1-diphosphate site. Uracil-binding positions include isoleucine 194 and 199-201 (GDA). Position 200 (aspartate 200) interacts with 5-phospho-alpha-D-ribose 1-diphosphate.

This sequence belongs to the UPRTase family. Requires Mg(2+) as cofactor.

The enzyme catalyses UMP + diphosphate = 5-phospho-alpha-D-ribose 1-diphosphate + uracil. Its pathway is pyrimidine metabolism; UMP biosynthesis via salvage pathway; UMP from uracil: step 1/1. With respect to regulation, allosterically activated by GTP. Catalyzes the conversion of uracil and 5-phospho-alpha-D-ribose 1-diphosphate (PRPP) to UMP and diphosphate. This Bradyrhizobium diazoefficiens (strain JCM 10833 / BCRC 13528 / IAM 13628 / NBRC 14792 / USDA 110) protein is Uracil phosphoribosyltransferase.